Here is a 155-residue protein sequence, read N- to C-terminus: Ribosome maturation factor RimP (155 aa).

It belongs to the RimP family.

It localises to the cytoplasm. Its function is as follows. Required for maturation of 30S ribosomal subunits. This Listeria monocytogenes serotype 4b (strain CLIP80459) protein is Ribosome maturation factor RimP.